The primary structure comprises 107 residues: UPF0145 protein Spro_1658 (107 aa).

Belongs to the UPF0145 family.

In Serratia proteamaculans (strain 568), this protein is UPF0145 protein Spro_1658.